Reading from the N-terminus, the 496-residue chain is Fibronectin type III and SPRY domain-containing protein 1 (496 aa).

Residues 4 to 99 (QREALRKIIT…ALESSEELLE (96 aa)) are a coiled coil. Residues 105 to 162 (LQASDSEDFSQAAKEIKDGITMAPAFRLSLKAKVSDNMSHLMVDFAQERQMLQALKFL) enclose the COS domain. A Fibronectin type-III domain is found at 164-268 (VPSAPTIDLA…EPVTLETPAF (105 aa)). A B30.2/SPRY domain is found at 290–477 (WDAMGGKVQD…VTTGLQVPSA (188 aa)). Residues 301 to 336 (KAREKEGKGRTASPVNSPARGTPSPKRMSSGRGGRD) form a disordered region. 2 positions are modified to omega-N-methylarginine: arginine 310 and arginine 320.

Oligomerization is required for binding to microtubules.

The protein resides in the cytoplasm. The protein localises to the cytoskeleton. Its subcellular location is the microtubule organizing center. It localises to the centrosome. It is found in the nucleus. The protein resides in the cleavage furrow. Its function is as follows. May be involved in microtubule organization and stabilization. This chain is Fibronectin type III and SPRY domain-containing protein 1 (Fsd1), found in Mus musculus (Mouse).